The primary structure comprises 25 residues: Unknown protein 7 (25 aa).

A disordered region spans residues 1-25 (MENGKVHVASMSGLSMPHMNEMLEK).

This is Unknown protein 7 from Pseudotsuga menziesii (Douglas-fir).